Here is a 200-residue protein sequence, read N- to C-terminus: Putative manganese exporter (200 aa).

A run of 6 helical transmembrane segments spans residues 13-33 (TEHVMSVLAISITTVALAEIG), 53-73 (IIAAIFLATLANHALAAWLGV), 81-101 (PDILKWVLVVSFLTMAGWILI), 110-130 (SISTRGPFVASFIAFFMAEIG), 150-170 (WVIVGTTLGMLLANVPVVLIG), and 180-200 (GLIRKVTAGLFLLMALATAFF).

Belongs to the GDT1 family.

It is found in the cell inner membrane. Involved in manganese homeostasis. May function as a manganese exporter. This chain is Putative manganese exporter, found in Vibrio cholerae serotype O1 (strain ATCC 39541 / Classical Ogawa 395 / O395).